Here is a 215-residue protein sequence, read N- to C-terminus: Adenylate kinase (215 aa).

10 to 15 contacts ATP; the sequence is GAGKGT. The interval 30–59 is NMP; that stretch reads STGDMLREAVAAGTELGKKVKEIIEKGLLV. AMP contacts are provided by residues threonine 31, arginine 36, 57–59, 85–88, and glutamine 92; these read LLV and GFPR. Residues 126 to 163 form an LID region; sequence SRRVCPSCGKVYNLLTIKPKNDMLCDDCNIGLIQREDD. Arginine 127 lines the ATP pocket. 2 residues coordinate Zn(2+): cysteine 130 and cysteine 133. Residue 136–137 participates in ATP binding; the sequence is VY. Zn(2+) contacts are provided by cysteine 150 and cysteine 153. Arginine 160 and arginine 171 together coordinate AMP. Leucine 199 contacts ATP.

It belongs to the adenylate kinase family. Monomer.

Its subcellular location is the cytoplasm. It catalyses the reaction AMP + ATP = 2 ADP. It functions in the pathway purine metabolism; AMP biosynthesis via salvage pathway; AMP from ADP: step 1/1. Its function is as follows. Catalyzes the reversible transfer of the terminal phosphate group between ATP and AMP. Plays an important role in cellular energy homeostasis and in adenine nucleotide metabolism. This Kosmotoga olearia (strain ATCC BAA-1733 / DSM 21960 / TBF 19.5.1) protein is Adenylate kinase.